The chain runs to 106 residues: MAEEHSNQRSQTFNGERTNRPSRKPRGDGERRGRRQGGRRRVDYLAVNHIDYVDYKDTELLQRFIADNGKILPRRITGTSSKNQRKIATAIKRARIMALLPFVANN.

The segment at 1 to 41 (MAEEHSNQRSQTFNGERTNRPSRKPRGDGERRGRRQGGRRR) is disordered.

The protein belongs to the bacterial ribosomal protein bS18 family. As to quaternary structure, part of the 30S ribosomal subunit. Forms a tight heterodimer with protein bS6.

Binds as a heterodimer with protein bS6 to the central domain of the 16S rRNA, where it helps stabilize the platform of the 30S subunit. In Oenococcus oeni (strain ATCC BAA-331 / PSU-1), this protein is Small ribosomal subunit protein bS18.